A 725-amino-acid polypeptide reads, in one-letter code: MEIEKSNNGGSNPSAGEEFKDMIKGVTKFLMMVIFLGTIMLWIMMPTLTYRTKWLPHLRIKFGTSTYFGATGTTLFMYMFPMMVVACLGCVYLHFKNRKSPHHIDRETKGGVWSKLRKPMLVKGPLGIVSVTEITFLAMFVALLLWCFITYLRNSFATITPKSAAAHDESLWQAKLESAALRLGLIGNICLAFLFLPVARGSSLLPAMGLTSESSIKYHIWLGHMVMALFTVHGLCYIIYWASMHEISQMIMWDTKGVSNLAGEIALAAGLVMWATTYPKIRRRFFEVFFYTHYLYIVFMLFFVLHVGISFSFIALPGFYIFLVDRFLRFLQSRENVRLLAARILPSDTMELTFSKNSKLVYSPTSIMFVNIPSISKLQWHPFTITSSSKLEPEKLSIVIKKEGKWSTKLHQRLSSSDQIDRLAVSVEGPYGPASADFLRHEALVMVCGGSGITPFISVIRDLIATSQKETCKIPKITLICAFKKSSEISMLDLVLPLSGLETELSSDINIKIEAFITRDNDAGDEAKAGKIKTLWFKPSLSDQSISSILGPNSWLWLGAILASSFLIFMIIIGIITRYYIYPIDHNTNKIYSLTSKTIIYILVISVSIMATCSAAMLWNKKKYGKVESKQVQNVDRPSPTSSPTSSWGYNSLREIESTPQESLVQRTNLHFGERPNLKKLLLDVEGSSVGVLVCGPKKMRQKVAEICSSGLAENLHFESISFSW.

Residues Met-1–Lys-28 are Cytoplasmic-facing. The chain crosses the membrane as a helical span at residues Phe-29 to Leu-48. The Extracellular portion of the chain corresponds to Thr-49–Thr-74. A helical transmembrane segment spans residues Leu-75–Leu-93. Topologically, residues His-94–Pro-125 are cytoplasmic. Residues Leu-126–Ile-149 traverse the membrane as a helical segment. Residues Thr-150 to Lys-217 lie on the Extracellular side of the membrane. In terms of domain architecture, Ferric oxidoreductase spans Leu-183–Phe-303. The chain crosses the membrane as a helical span at residues Tyr-218–Trp-241. Heme contacts are provided by His-219 and His-233. Residues Ala-242 to Tyr-291 are Cytoplasmic-facing. A helical transmembrane segment spans residues Thr-292 to Leu-316. Positions 293 and 306 each coordinate heme. Residues Pro-317 to Arg-338 lie on the Extracellular side of the membrane. One can recognise an FAD-binding FR-type domain in the interval Gln-332–Asp-437. Residues Leu-339–Lys-359 traverse the membrane as a helical segment. Residues Leu-360–Ser-554 are Cytoplasmic-facing. His-381 to Thr-384 provides a ligand contact to FAD. Gly-429 to Gly-432 provides a ligand contact to NAD(+). Residues Trp-555–Thr-577 form a helical membrane-spanning segment. Over Arg-578–Lys-597 the chain is Extracellular. The chain crosses the membrane as a helical span at residues Thr-598–Trp-619. The Cytoplasmic portion of the chain corresponds to Asn-620 to Trp-725.

The protein belongs to the ferric reductase (FRE) family. It depends on FAD as a cofactor. Expressed in the epidermal cells of the roots. High expression in lateral roots and root hairs. Detected in leaves, stems, siliques and in flowers in anthers and styles.

Its subcellular location is the cell membrane. It carries out the reaction 2 a Fe(II)-siderophore + NAD(+) + H(+) = 2 a Fe(III)-siderophore + NADH. Functionally, flavocytochrome that transfers electrons across the plasma membrane to reduce ferric iron chelates to form soluble ferrous iron in the rhizosphere. May be involved in the delivery of iron to developing pollen grains. Also acts as a copper-chelate reductase. Involved in glycine betaine-mediated chilling tolerance and reactive oxygen species accumulation. The protein is Ferric reduction oxidase 2 (FRO2) of Arabidopsis thaliana (Mouse-ear cress).